A 654-amino-acid polypeptide reads, in one-letter code: Fructose-1,6-bisphosphatase class 3 (654 aa).

The tract at residues 288 to 307 (NPAFKPKKRPDKHERLTQRE) is disordered. Positions 298–307 (DKHERLTQRE) are enriched in basic and acidic residues.

Belongs to the FBPase class 3 family. Requires Mn(2+) as cofactor.

The catalysed reaction is beta-D-fructose 1,6-bisphosphate + H2O = beta-D-fructose 6-phosphate + phosphate. It participates in carbohydrate biosynthesis; gluconeogenesis. The chain is Fructose-1,6-bisphosphatase class 3 from Staphylococcus aureus (strain MSSA476).